The primary structure comprises 185 residues: Auxin-responsive protein IAA34 (185 aa).

The EAR-like (transcriptional repression) motif lies at 63-67 (LGLSL). The PB1 domain occupies 92–180 (WGYVKVTMDG…ERLRITRRND (89 aa)).

Belongs to the Aux/IAA family. As to quaternary structure, homodimers and heterodimers.

It is found in the nucleus. Its function is as follows. Aux/IAA proteins are short-lived transcriptional factors that function as repressors of early auxin response genes at low auxin concentrations. Repression is thought to result from the interaction with auxin response factors (ARFs), proteins that bind to the auxin-responsive promoter element (AuxRE). Formation of heterodimers with ARF proteins may alter their ability to modulate early auxin response genes expression. The chain is Auxin-responsive protein IAA34 (IAA34) from Arabidopsis thaliana (Mouse-ear cress).